The following is a 251-amino-acid chain: Cell division protein ZapD (251 aa).

It belongs to the ZapD family. In terms of assembly, interacts with FtsZ.

It localises to the cytoplasm. Functionally, cell division factor that enhances FtsZ-ring assembly. Directly interacts with FtsZ and promotes bundling of FtsZ protofilaments, with a reduction in FtsZ GTPase activity. The polypeptide is Cell division protein ZapD (Paraburkholderia phytofirmans (strain DSM 17436 / LMG 22146 / PsJN) (Burkholderia phytofirmans)).